The following is a 149-amino-acid chain: Glutamyl-tRNA(Gln) amidotransferase subunit C, mitochondrial (149 aa).

The protein belongs to the GatC family. Subunit of the heterotrimeric GatCAB amidotransferase (AdT) complex, composed of A, B and C subunits.

It localises to the mitochondrion. The enzyme catalyses L-glutamyl-tRNA(Gln) + L-glutamine + ATP + H2O = L-glutaminyl-tRNA(Gln) + L-glutamate + ADP + phosphate + H(+). Allows the formation of correctly charged Gln-tRNA(Gln) through the transamidation of misacylated Glu-tRNA(Gln) in the mitochondria. The reaction takes place in the presence of glutamine and ATP through an activated gamma-phospho-Glu-tRNA(Gln). The sequence is that of Glutamyl-tRNA(Gln) amidotransferase subunit C, mitochondrial from Trichoplax adhaerens (Trichoplax reptans).